A 617-amino-acid chain; its full sequence is MHCKVSLLDDTVYECVVEKHAKGQDLLKRVCEHLNLLEEDYFGLAIWDNATSKTWLDSAKEIKKQVRGVPWNFTFNVKFYPPDPAQLTEDITRYYLCLQLRQDIVSGRLPCSFATLALLGSYTIQSELGDYDPELHGADYVSDFKLAPNQTKELEEKVMELHKSYRSMTPAQADLEFLENAKKLSMYGVDLHKAKDLEGVDIILGVCSSGLLVYKEKLRINRFPWPKVLKISYKRSSFFIKIRPGEQEQYESTIGFKLPSYRAAKKLWKVCVEHHTFFRLTSTDTIPKSKFLALGSKFRYSGRTQAQTRQASALIDRPAPHFERTASKRASRSLDGAAAVEPADRTPRPTSAPAIAPSPAAEGGVPGAPVKKAQKETVQVEVKQEEAPPEDAEPEPSEAWKKKRERLDGENIYIRHSNLMLEDLDKSQEEIKKHHASISELKKNFMESVPEPRPSEWDKRLSTHSPFRTLNINGQIPTGEGPPLVKTQTVTISDTANAVKSEIPTKDVPIVHTETKTITYEAAQTDDSNGDLDPGVLLTAQTITSETTSSTTTTQITKTVKGGISETRIEKRIVITGDADIDHDQVLVQAIKEAKEQHPDMSVTKVVVHQETEISEE.

The FERM domain occupies 1–282 (MHCKVSLLDD…EHHTFFRLTS (282 aa)). Phosphotyrosine is present on Tyr-13. At Thr-169 the chain carries Phosphothreonine. The segment at 308 to 401 (TRQASALIDR…AEPEPSEAWK (94 aa)) is disordered. Phosphoserine is present on residues Ser-312, Ser-331, and Ser-333. Positions 348–361 (RPTSAPAIAPSPAA) are enriched in low complexity. Positions 387-396 (APPEDAEPEP) are enriched in acidic residues. Residues 401 to 466 (KKKRERLDGE…WDKRLSTHSP (66 aa)) are spectrin--actin-binding. Tyr-413 carries the post-translational modification Phosphotyrosine; by EGFR. Ser-417, Ser-427, Ser-437, and Ser-462 each carry phosphoserine. At Ser-465 the chain carries Phosphoserine; by CDK1. Residues 467–617 (FRTLNINGQI…VHQETEISEE (151 aa)) form a C-terminal (CTD) region. Thr-489 and Thr-612 each carry phosphothreonine.

Binds with a high affinity to glycophorin and with lower affinity to band III protein. Associates with the nuclear mitotic apparatus. Binds calmodulin, CPAP and DLG1. Also found to associate with contractile apparatus and tight junctions. Interacts with NUMA1; this interaction is negatively regulated by CDK1 during metaphase and promotes anaphase-specific localization of NUMA1 in symmetrically dividing cells. Interacts with ATP2B1; regulates small intestinal calcium absorption through regulation of membrane expression of ATP2B1. In terms of processing, phosphorylated at multiple sites by different protein kinases and each phosphorylation event selectively modulates the protein's functions. Post-translationally, phosphorylation on Tyr-413 reduces the ability of 4.1 to promote the assembly of the spectrin/actin/4.1 ternary complex.

The protein resides in the nucleus. Its subcellular location is the cytoplasm. It is found in the cytoskeleton. The protein localises to the cell cortex. Functionally, protein 4.1 is a major structural element of the erythrocyte membrane skeleton. It plays a key role in regulating membrane physical properties of mechanical stability and deformability by stabilizing spectrin-actin interaction. Recruits DLG1 to membranes. Required for dynein-dynactin complex and NUMA1 recruitment at the mitotic cell cortex during anaphase. In Bos taurus (Bovine), this protein is Protein 4.1.